A 259-amino-acid polypeptide reads, in one-letter code: Indole-3-glycerol phosphate synthase (259 aa).

Belongs to the TrpC family.

The catalysed reaction is 1-(2-carboxyphenylamino)-1-deoxy-D-ribulose 5-phosphate + H(+) = (1S,2R)-1-C-(indol-3-yl)glycerol 3-phosphate + CO2 + H2O. It participates in amino-acid biosynthesis; L-tryptophan biosynthesis; L-tryptophan from chorismate: step 4/5. This is Indole-3-glycerol phosphate synthase from Rhodopirellula baltica (strain DSM 10527 / NCIMB 13988 / SH1).